The primary structure comprises 424 residues: Dapdiamide A synthase (424 aa).

Residues 120–318 (QEQLALKGVA…QISKLAQAVL (199 aa)) enclose the ATP-grasp domain. Position 147-209 (147-209 (AGHAHWPVVL…QEFLAGEEFV (63 aa))) interacts with ATP. 2 residues coordinate Mg(2+): glutamate 275 and glutamate 287.

Mg(2+) serves as cofactor. The cofactor is Mn(2+).

The enzyme catalyses 3-[[[(2R,3R)-3-carboxyoxiran-2-yl]carbonyl]amino]-L-alanine + L-valine + ATP = dapdiamide E + ADP + phosphate + H(+). The catalysed reaction is N(3)-fumaramoyl-(S)-2,3-diaminopropanoate + L-valine + ATP = dapdiamide A + ADP + phosphate + H(+). It carries out the reaction N(3)-fumaramoyl-(S)-2,3-diaminopropanoate + L-isoleucine + ATP = dapdiamide B + ADP + phosphate + H(+). It catalyses the reaction N(3)-fumaramoyl-(S)-2,3-diaminopropanoate + L-leucine + ATP = dapdiamide C + ADP + phosphate + H(+). It participates in antibiotic biosynthesis. Involved in dapdiamide antibiotics biosynthesis. Ligates N-beta-fumaramoyl-DAP and valine, isoleucine or leucine to form dapdiamides A, B or C, respectively. Also ligates N-beta-epoxysuccinamoyl-DAP and valine to form dapdiamide E. This is Dapdiamide A synthase from Enterobacter agglomerans (Erwinia herbicola).